The primary structure comprises 331 residues: 6-phosphogluconolactonase (331 aa).

It belongs to the cycloisomerase 2 family.

The catalysed reaction is 6-phospho-D-glucono-1,5-lactone + H2O = 6-phospho-D-gluconate + H(+). Its pathway is carbohydrate degradation; pentose phosphate pathway; D-ribulose 5-phosphate from D-glucose 6-phosphate (oxidative stage): step 2/3. Functionally, catalyzes the hydrolysis of 6-phosphogluconolactone to 6-phosphogluconate. The protein is 6-phosphogluconolactonase of Salmonella paratyphi A (strain ATCC 9150 / SARB42).